The chain runs to 716 residues: DNA ligase (716 aa).

Residues 49 to 53 (DAEYD), 98 to 99 (SL), and Glu-131 each bind NAD(+). The active-site N6-AMP-lysine intermediate is the Lys-133. NAD(+) contacts are provided by Arg-154, Glu-191, Lys-308, and Lys-332. Cys-437, Cys-439, Cys-461, and Cys-467 together coordinate Zn(2+). One can recognise a BRCT domain in the interval 638–716 (KRHSPIATKT…EDEWLQLIAE (79 aa)).

Belongs to the NAD-dependent DNA ligase family. LigA subfamily. The cofactor is Mg(2+). Requires Mn(2+) as cofactor.

The enzyme catalyses NAD(+) + (deoxyribonucleotide)n-3'-hydroxyl + 5'-phospho-(deoxyribonucleotide)m = (deoxyribonucleotide)n+m + AMP + beta-nicotinamide D-nucleotide.. Functionally, DNA ligase that catalyzes the formation of phosphodiester linkages between 5'-phosphoryl and 3'-hydroxyl groups in double-stranded DNA using NAD as a coenzyme and as the energy source for the reaction. It is essential for DNA replication and repair of damaged DNA. The sequence is that of DNA ligase from Bradyrhizobium sp. (strain BTAi1 / ATCC BAA-1182).